The following is a 425-amino-acid chain: D-tagatose 6-phosphate 4-epimerase (425 aa).

This sequence belongs to the GatZ/KbaZ family.

It carries out the reaction keto-D-tagatose 6-phosphate = keto-D-fructose 6-phosphate. It participates in carbohydrate metabolism. Involved in galactitol and D-altritol catabolism. Catalyzes the epimerization of D-tagatose 6-phosphate to D-fructose 6-phosphate. This chain is D-tagatose 6-phosphate 4-epimerase, found in Agrobacterium fabrum (strain C58 / ATCC 33970) (Agrobacterium tumefaciens (strain C58)).